Consider the following 179-residue polypeptide: Adenine phosphoribosyltransferase (179 aa).

This sequence belongs to the purine/pyrimidine phosphoribosyltransferase family. Homodimer.

It is found in the cytoplasm. It carries out the reaction AMP + diphosphate = 5-phospho-alpha-D-ribose 1-diphosphate + adenine. The protein operates within purine metabolism; AMP biosynthesis via salvage pathway; AMP from adenine: step 1/1. Catalyzes a salvage reaction resulting in the formation of AMP, that is energically less costly than de novo synthesis. This chain is Adenine phosphoribosyltransferase, found in Dinoroseobacter shibae (strain DSM 16493 / NCIMB 14021 / DFL 12).